The primary structure comprises 118 residues: Ly-6/neurotoxin-like protein 1 (118 aa).

Positions 1–22 (MTPLLTLFLVVLMGLPLAPVQA) are cleaved as a signal peptide. The UPAR/Ly6 domain maps to 23 to 107 (LDCHVCAYNG…LAIPATLALA (85 aa)). 5 disulfides stabilise this stretch: C25–C48, C28–C35, C41–C66, C70–C87, and C88–C93. S95 carries the GPI-anchor amidated serine lipid modification. Positions 96 to 118 (AGLAIPATLALAPVLLATLWGLL) are cleaved as a propeptide — removed in mature form.

In terms of assembly, interacts with nAChRs containing alpha-4:beta-2 (CHRNA4:CHRNB2) and alpha-7 (CHRNA7) subunits. Interacts with CHRNA4 probably in the endoplasmic reticulum prior to nAChR pentameric assembly. Interacts with KCNA2/Potassium voltage-gated channel subfamily A member 2. As to expression, expressed in lung predominantly in airway epithelial cells, submucous glands, and smooth muscle cells, in endothelial and smooth muscle cells in vessel walls and in alveolar type II cells (at protein level). Also expressed in brain.

Its subcellular location is the cell membrane. It is found in the cell projection. The protein localises to the dendrite. It localises to the endoplasmic reticulum. Its function is as follows. Acts in different tissues through interaction to nicotinic acetylcholine receptors (nAChRs). The proposed role as modulator of nAChR activity seems to be dependent on the nAChR subtype and stoichiometry, and to involve an effect on nAChR trafficking and its cell surface expression, and on single channel properties of the nAChR inserted in the plasma membrane. Modulates functional properties of nicotinic acetylcholine receptors (nAChRs) to prevent excessive excitation, and hence neurodegeneration. Enhances desensitization by increasing both the rate and extent of desensitization of alpha-4:beta-2-containing nAChRs and slowing recovery from desensitization. Promotes large amplitude ACh-evoked currents through alpha-4:beta-2 nAChRs. Is involved in regulation of the nAChR pentameric assembly in the endoplasmic reticulum. Shifts stoichiometry from high sensitivity alpha-4(2):beta-2(3) to low sensitivity alpha-4(3):beta-2(2) nAChR. In vitro modulates alpha-3:beta-4-containing nAChRs. Reduces cell surface expression of (alpha-3:beta-4)(2):beta-4 and (alpha-3:beta-4)(2):alpha-5 nAChRs suggesting an interaction with nAChR alpha-3(-):(+)beta-4 subunit interfaces and an allosteric mode. Corresponding single channel effects characterized by decreased unitary conductance, altered burst proportions and enhanced desensitization/inactivation seem to depend on nAChR alpha:alpha subunit interfaces and are greater in (alpha-3:beta-2)(2):alpha-3 when compared to (alpha-3:beta-2)(2):alpha-5 nAChRs. Prevents plasticity in the primary visual cortex late in life. The protein is Ly-6/neurotoxin-like protein 1 of Macaca mulatta (Rhesus macaque).